Consider the following 989-residue polypeptide: DNA-directed RNA polymerase subunit beta' (989 aa).

Residues Asp-383, Asp-385, and Asp-387 each contribute to the Mg(2+) site.

It belongs to the RNA polymerase beta' chain family. As to quaternary structure, the RNAP catalytic core consists of 2 alpha, 1 beta, 1 beta' and 1 omega subunit. When a sigma factor is associated with the core the holoenzyme is formed, which can initiate transcription. The cofactor is Mg(2+).

The catalysed reaction is RNA(n) + a ribonucleoside 5'-triphosphate = RNA(n+1) + diphosphate. Its function is as follows. DNA-dependent RNA polymerase catalyzes the transcription of DNA into RNA using the four ribonucleoside triphosphates as substrates. In Leuconostoc pseudomesenteroides, this protein is DNA-directed RNA polymerase subunit beta' (rpoC).